Reading from the N-terminus, the 101-residue chain is Small ribosomal subunit protein bS16 (101 aa).

This sequence belongs to the bacterial ribosomal protein bS16 family.

The polypeptide is Small ribosomal subunit protein bS16 (Ureaplasma urealyticum serovar 10 (strain ATCC 33699 / Western)).